We begin with the raw amino-acid sequence, 330 residues long: Glucan endo-1,3-beta-glucosidase GIII (330 aa).

Positions 1–25 are cleaved as a signal peptide; it reads MARKGVDVAVALVLVALAAFPAVHS. E117 (proton donor) is an active-site residue. The Nucleophile role is filled by E255.

This sequence belongs to the glycosyl hydrolase 17 family.

It carries out the reaction Hydrolysis of (1-&gt;3)-beta-D-glucosidic linkages in (1-&gt;3)-beta-D-glucans.. In terms of biological role, may provide a degree of protection against microbial invasion of germinated barley grain through its ability to degrade fungal cell wall polysaccharides. This chain is Glucan endo-1,3-beta-glucosidase GIII, found in Hordeum vulgare (Barley).